Here is a 34-residue protein sequence, read N- to C-terminus: PRRRRQASRPVRRRRRYRRSTAARRRRRVVRRRR.

A disordered region spans residues 1–34 (PRRRRQASRPVRRRRRYRRSTAARRRRRVVRRRR).

In terms of tissue distribution, testis.

The protein resides in the nucleus. The protein localises to the chromosome. In terms of biological role, protamines substitute for histones in the chromatin of sperm during the haploid phase of spermatogenesis. They compact sperm DNA into a highly condensed, stable and inactive complex. This Thunnus thynnus (Atlantic bluefin tuna) protein is Protamine-Y1/Y2.